Consider the following 443-residue polypeptide: Sperm-associated antigen 4 protein (443 aa).

Over residues 1–36 (MRRSPRSGSAASSHNHTPNFYSENSNSSHSATSGDS) the composition is skewed to low complexity. A disordered region spans residues 1 to 107 (MRRSPRSGSA…VRGGASEPSG (107 aa)). 2 helical membrane-spanning segments follow: residues 137–157 (FLSL…DGLV) and 168–188 (FLFT…WGLL). Residues 203-244 (TLSQYHHRVHSQGQQLQQLQAELNKLHKEVSSVRAAHSERVA) are a coiled coil. The 161-residue stretch at 267–427 (GASIDLEKTS…YRVRAHGVRT (161 aa)) folds into the SUN domain.

In terms of assembly, self-associates. Interacts with ODF1. May associate with microtubules. Interacts with SUN3 and SYNE1; suggesting the formation of a spermatogenesis-specific LINC complex; a SUN domain-based heterotrimer of SPAG4 and SUN3 may associate with SYNE1. Interacts with SEPT12 and LMNB1; during spermatogenesis. Isoform 1 is testis specific and is exclusively expressed in spermatids.

The protein resides in the membrane. It is found in the cytoplasm. Its subcellular location is the cytoskeleton. The protein localises to the nucleus envelope. It localises to the nucleus inner membrane. The protein resides in the flagellum axoneme. Functionally, involved in spermatogenesis. Required for sperm head formation but not required to establish and maintain general polarity of the sperm head. Required for anchoring and organization of the manchette. Required for targeting of SUN3 and probably SYNE1 through a probable SUN1:SYNE3 LINC complex to the nuclear envelope and involved in accurate posterior sperm head localization of the complex. May anchor SUN3 the nuclear envelope. Involved in maintenance of the nuclear envelope integrity. May assist the organization and assembly of outer dense fibers (ODFs), a specific structure of the sperm tail. This Mus musculus (Mouse) protein is Sperm-associated antigen 4 protein (Spag4).